Reading from the N-terminus, the 272-residue chain is Indole-3-glycerol phosphate synthase (272 aa).

Belongs to the TrpC family.

The enzyme catalyses 1-(2-carboxyphenylamino)-1-deoxy-D-ribulose 5-phosphate + H(+) = (1S,2R)-1-C-(indol-3-yl)glycerol 3-phosphate + CO2 + H2O. It participates in amino-acid biosynthesis; L-tryptophan biosynthesis; L-tryptophan from chorismate: step 4/5. The sequence is that of Indole-3-glycerol phosphate synthase from Arthrobacter sp. (strain FB24).